Here is a 266-residue protein sequence, read N- to C-terminus: Small ribosomal subunit protein uS3 (266 aa).

The 69-residue stretch at 39–107 (VREYLKKKLK…PVHVNIEEIR (69 aa)) folds into the KH type-2 domain. The interval 214–266 (PVVEEVTEDKRPRRNARPGDRRPRRDGEGGAPGARRGGPRRGAGKPEDGKTGE) is disordered. Composition is skewed to basic and acidic residues over residues 230-241 (RPGDRRPRRDGE) and 257-266 (GKPEDGKTGE).

The protein belongs to the universal ribosomal protein uS3 family. Part of the 30S ribosomal subunit. Forms a tight complex with proteins S10 and S14.

In terms of biological role, binds the lower part of the 30S subunit head. Binds mRNA in the 70S ribosome, positioning it for translation. The polypeptide is Small ribosomal subunit protein uS3 (Burkholderia thailandensis (strain ATCC 700388 / DSM 13276 / CCUG 48851 / CIP 106301 / E264)).